The following is a 148-amino-acid chain: Cyanate hydratase (148 aa).

Catalysis depends on residues arginine 89, glutamate 92, and serine 115.

This sequence belongs to the cyanase family.

The catalysed reaction is cyanate + hydrogencarbonate + 3 H(+) = NH4(+) + 2 CO2. Catalyzes the reaction of cyanate with bicarbonate to produce ammonia and carbon dioxide. The polypeptide is Cyanate hydratase (Sulfurisphaera tokodaii (strain DSM 16993 / JCM 10545 / NBRC 100140 / 7) (Sulfolobus tokodaii)).